The following is a 563-amino-acid chain: PHD finger protein EHD3 (563 aa).

The interval 1–46 (MGSQNRPPPPRKRQPPPPEDHLVTYKRRRSKETQPLPLMANGANSK) is disordered. 3 consecutive PHD-type zinc fingers follow at residues 296-348 (LCPC…CSFK), 420-472 (SNLC…CWYC), and 474-524 (SCLC…CKIR).

As to quaternary structure, interacts with TRX1. Expressed in shoot apical meristem and leaves.

Its subcellular location is the nucleus. Functionally, probable transcription factor involved in the regulation of floral induction under long day (LD) conditions. Promotes photoperiodic flowering by repressing GHD7, a major floral repressor. Seems to function independently of HD1. This Oryza sativa subsp. japonica (Rice) protein is PHD finger protein EHD3.